The primary structure comprises 243 residues: Putative C-type lectin protein A7 (243 aa).

The chain crosses the membrane as a helical span at residues 23–43 (IFFILAATNLMIAAFALGCLA). The region spanning 116–223 (GQKACYYVPP…CTTSKLCLCG (108 aa)) is the C-type lectin domain. 2 disulfides stabilise this stretch: Cys-137/Cys-222 and Cys-198/Cys-214.

The protein resides in the host membrane. The protein is Putative C-type lectin protein A7 (A7) of Alcelaphine herpesvirus 1 (strain C500) (AlHV-1).